The primary structure comprises 251 residues: Small ribosomal subunit protein uS2 (251 aa).

The protein belongs to the universal ribosomal protein uS2 family.

The polypeptide is Small ribosomal subunit protein uS2 (Synechococcus elongatus (strain ATCC 33912 / PCC 7942 / FACHB-805) (Anacystis nidulans R2)).